A 386-amino-acid polypeptide reads, in one-letter code: Succinate--CoA ligase [ADP-forming] subunit beta (386 aa).

In terms of domain architecture, ATP-grasp spans K9–E244. ATP is bound by residues K46, G53 to G55, E99, C102, and E107. The Mg(2+) site is built by N199 and D213. Residues N264 and G321–M323 each bind substrate.

It belongs to the succinate/malate CoA ligase beta subunit family. As to quaternary structure, heterotetramer of two alpha and two beta subunits. Mg(2+) serves as cofactor.

The catalysed reaction is succinate + ATP + CoA = succinyl-CoA + ADP + phosphate. It carries out the reaction GTP + succinate + CoA = succinyl-CoA + GDP + phosphate. The protein operates within carbohydrate metabolism; tricarboxylic acid cycle; succinate from succinyl-CoA (ligase route): step 1/1. Functionally, succinyl-CoA synthetase functions in the citric acid cycle (TCA), coupling the hydrolysis of succinyl-CoA to the synthesis of either ATP or GTP and thus represents the only step of substrate-level phosphorylation in the TCA. The beta subunit provides nucleotide specificity of the enzyme and binds the substrate succinate, while the binding sites for coenzyme A and phosphate are found in the alpha subunit. In Bacillus anthracis (strain A0248), this protein is Succinate--CoA ligase [ADP-forming] subunit beta.